A 70-amino-acid polypeptide reads, in one-letter code: Small ribosomal subunit protein bS21 (70 aa).

It belongs to the bacterial ribosomal protein bS21 family.

This chain is Small ribosomal subunit protein bS21, found in Polynucleobacter asymbioticus (strain DSM 18221 / CIP 109841 / QLW-P1DMWA-1) (Polynucleobacter necessarius subsp. asymbioticus).